A 155-amino-acid chain; its full sequence is RNA pyrophosphohydrolase (155 aa).

Residues 6–148 form the Nudix hydrolase domain; the sequence is GYRANVAIVL…KQDVYRRALT (143 aa). The Nudix box signature appears at 38–59; that stretch reads GGVATGETPLQAMYRELYEEVG.

It belongs to the Nudix hydrolase family. RppH subfamily. A divalent metal cation is required as a cofactor.

Accelerates the degradation of transcripts by removing pyrophosphate from the 5'-end of triphosphorylated RNA, leading to a more labile monophosphorylated state that can stimulate subsequent ribonuclease cleavage. This chain is RNA pyrophosphohydrolase, found in Francisella philomiragia subsp. philomiragia (strain ATCC 25017 / CCUG 19701 / FSC 153 / O#319-036).